The primary structure comprises 396 residues: Ribosomal RNA large subunit methyltransferase I (396 aa).

In terms of domain architecture, PUA spans 2 to 79; sequence SVFIYLVKGR…KEETVDLDFF (78 aa).

This sequence belongs to the methyltransferase superfamily. RlmI family.

It localises to the cytoplasm. It carries out the reaction cytidine(1962) in 23S rRNA + S-adenosyl-L-methionine = 5-methylcytidine(1962) in 23S rRNA + S-adenosyl-L-homocysteine + H(+). Functionally, specifically methylates the cytosine at position 1962 (m5C1962) of 23S rRNA. This chain is Ribosomal RNA large subunit methyltransferase I, found in Aeromonas salmonicida (strain A449).